A 116-amino-acid polypeptide reads, in one-letter code: Ribosome-binding factor A (116 aa).

It belongs to the RbfA family. As to quaternary structure, monomer. Binds 30S ribosomal subunits, but not 50S ribosomal subunits or 70S ribosomes.

Its subcellular location is the cytoplasm. In terms of biological role, one of several proteins that assist in the late maturation steps of the functional core of the 30S ribosomal subunit. Associates with free 30S ribosomal subunits (but not with 30S subunits that are part of 70S ribosomes or polysomes). Required for efficient processing of 16S rRNA. May interact with the 5'-terminal helix region of 16S rRNA. This chain is Ribosome-binding factor A, found in Clostridium perfringens (strain 13 / Type A).